The following is a 902-amino-acid chain: Nitrate reductase [NADPH] (902 aa).

Cys182 contacts Mo-molybdopterin. The Cytochrome b5 heme-binding domain maps to 537–612 (LPLIFADEVA…LKKYCIGRCS (76 aa)). Positions 572 and 595 each coordinate heme. Residues 637–751 (RTKVPIVLIS…KGPLGHFTYY (115 aa)) form the FAD-binding FR-type domain. Residues 689-692 (RAYT), 708-712 (LIKVY), Phe713, 725-727 (LFS), and Thr778 contribute to the FAD site. 872–879 (CMCGPEGM) serves as a coordination point for NADP(+).

This sequence belongs to the nitrate reductase family. In terms of assembly, homodimer. FAD is required as a cofactor. The cofactor is heme. Mo-molybdopterin serves as cofactor.

The catalysed reaction is nitrite + NADP(+) + H2O = nitrate + NADPH + H(+). Functionally, nitrate reductase is a key enzyme involved in the first step of nitrate assimilation in plants, fungi and bacteria. This Phytophthora infestans (Potato late blight agent) protein is Nitrate reductase [NADPH] (NIAA).